The following is a 451-amino-acid chain: PTS system cellobiose-specific EIIC component (451 aa).

The PTS EIIC type-3 domain maps to 8–423 (LEDRVMPVAG…FIAFAIYYPF (416 aa)). A run of 10 helical transmembrane segments spans residues 31 to 51 (GIIL…VGFL), 72 to 92 (LLYP…FGVA), 104 to 124 (LSAG…QVPF), 138 to 158 (GIPV…LAIV), 187 to 207 (FVAL…RLIL), 227 to 247 (LSVL…VQLL), 250 to 270 (TGLH…LSLM), 293 to 313 (FFDL…ALTM), 347 to 367 (IVMN…LVVV), and 407 to 427 (ILQI…FSIW).

The protein resides in the cell membrane. The phosphoenolpyruvate-dependent sugar phosphotransferase system (sugar PTS), a major carbohydrate active transport system, catalyzes the phosphorylation of incoming sugar substrates concomitantly with their translocation across the cell membrane. The enzyme II CelABD PTS system is involved in cellobiose transport. This Geobacillus stearothermophilus (Bacillus stearothermophilus) protein is PTS system cellobiose-specific EIIC component.